Here is a 191-residue protein sequence, read N- to C-terminus: Peptidyl-tRNA hydrolase (191 aa).

Tyr-17 is a binding site for tRNA. Catalysis depends on His-22, which acts as the Proton acceptor. TRNA contacts are provided by Tyr-68, Asn-70, and Asn-116.

The protein belongs to the PTH family. In terms of assembly, monomer.

The protein resides in the cytoplasm. It catalyses the reaction an N-acyl-L-alpha-aminoacyl-tRNA + H2O = an N-acyl-L-amino acid + a tRNA + H(+). Hydrolyzes ribosome-free peptidyl-tRNAs (with 1 or more amino acids incorporated), which drop off the ribosome during protein synthesis, or as a result of ribosome stalling. Functionally, catalyzes the release of premature peptidyl moieties from peptidyl-tRNA molecules trapped in stalled 50S ribosomal subunits, and thus maintains levels of free tRNAs and 50S ribosomes. The protein is Peptidyl-tRNA hydrolase of Francisella tularensis subsp. holarctica (strain FTNF002-00 / FTA).